A 642-amino-acid chain; its full sequence is Threonine--tRNA ligase (642 aa).

The TGS domain maps to 1–61; the sequence is MPVITLPDGS…ENDATLSIIT (61 aa). The catalytic stretch occupies residues 243 to 534; sequence DHRKIGKQLD…LTEEFAGFFP (292 aa). Zn(2+) contacts are provided by Cys-334, His-385, and His-511.

It belongs to the class-II aminoacyl-tRNA synthetase family. Homodimer. It depends on Zn(2+) as a cofactor.

The protein localises to the cytoplasm. The catalysed reaction is tRNA(Thr) + L-threonine + ATP = L-threonyl-tRNA(Thr) + AMP + diphosphate + H(+). Catalyzes the attachment of threonine to tRNA(Thr) in a two-step reaction: L-threonine is first activated by ATP to form Thr-AMP and then transferred to the acceptor end of tRNA(Thr). Also edits incorrectly charged L-seryl-tRNA(Thr). The polypeptide is Threonine--tRNA ligase (Salmonella agona (strain SL483)).